Consider the following 170-residue polypeptide: Peptide deformylase (170 aa).

Residues cysteine 91 and histidine 133 each coordinate Fe cation. Glutamate 134 is an active-site residue. Histidine 137 is a binding site for Fe cation.

This sequence belongs to the polypeptide deformylase family. The cofactor is Fe(2+).

It catalyses the reaction N-terminal N-formyl-L-methionyl-[peptide] + H2O = N-terminal L-methionyl-[peptide] + formate. Removes the formyl group from the N-terminal Met of newly synthesized proteins. Requires at least a dipeptide for an efficient rate of reaction. N-terminal L-methionine is a prerequisite for activity but the enzyme has broad specificity at other positions. This is Peptide deformylase from Glaesserella parasuis serovar 5 (strain SH0165) (Haemophilus parasuis).